A 285-amino-acid chain; its full sequence is sn-2 palmitoyl-lipid 9-desaturase (285 aa).

Helical transmembrane passes span 20-40 (WINV…PWFF) and 44-64 (ALGL…CLGY). The Histidine box-1 motif lies at 65–70 (HRLLSH). The helical transmembrane segment at 81-101 (YAIALIGALALQGGPIFWVGG) threads the bilayer. The Histidine box-2 signature appears at 102–106 (HRQHH). The helical transmembrane segment at 169 to 189 (IPFALLLYVLGGWPFVFYGVF) threads the bilayer. The Histidine box-3 signature appears at 239 to 243 (HHTYP).

It belongs to the fatty acid desaturase type 2 family. Fe(2+) is required as a cofactor.

The protein resides in the membrane. The catalysed reaction is a 1-acyl-2-hexadecanoyl-glycerolipid + 2 reduced [2Fe-2S]-[ferredoxin] + O2 + 2 H(+) = a 1-acyl-2-[(9Z)-hexadecenoyl]-glycerolipid + 2 oxidized [2Fe-2S]-[ferredoxin] + 2 H2O. Its pathway is lipid metabolism; fatty acid biosynthesis. Its function is as follows. Desaturase involved in fatty acid biosynthesis. Introduces a double bond at carbon 9 of palmitoyl groups (16:0) attached to the sn-2 position of the glycerol moiety of membrane glycerolipids. The sequence is that of sn-2 palmitoyl-lipid 9-desaturase from Nostoc sp. (strain 36).